The primary structure comprises 321 residues: uncharacterized protein (321 aa).

10 helical membrane-spanning segments follow: residues 6–26 (LFIG…MFPV), 37–57 (FYFS…LLLV), 72–92 (WIIL…FLGQ), 100–120 (IMTA…ILWG), 134–154 (ILIA…SFFF), 160–180 (LFSI…TMGG), 196–216 (CLFG…QGYV), 223–243 (VIAA…IIAL), 255–275 (SING…IMVI), and 277–297 (GYNI…GLIL). 2 EamA domains span residues 18–146 (MSWG…MVIT) and 175–300 (VYTM…LNNI).

It belongs to the EamA transporter family.

Its subcellular location is the cell membrane. This is an uncharacterized protein from Bacillus subtilis (strain 168).